We begin with the raw amino-acid sequence, 545 residues long: Chaperonin GroEL (545 aa).

Residues 31-34, 88-92, G415, 478-480, and D494 contribute to the ATP site; these read TLGP, DGTTT, and NAA.

This sequence belongs to the chaperonin (HSP60) family. As to quaternary structure, forms a cylinder of 14 subunits composed of two heptameric rings stacked back-to-back. Interacts with the co-chaperonin GroES.

It is found in the cytoplasm. The enzyme catalyses ATP + H2O + a folded polypeptide = ADP + phosphate + an unfolded polypeptide.. Its function is as follows. Together with its co-chaperonin GroES, plays an essential role in assisting protein folding. The GroEL-GroES system forms a nano-cage that allows encapsulation of the non-native substrate proteins and provides a physical environment optimized to promote and accelerate protein folding. In Streptococcus pyogenes serotype M4 (strain MGAS10750), this protein is Chaperonin GroEL.